Consider the following 438-residue polypeptide: Serine hydroxymethyltransferase (438 aa).

Residues L133 and 137-139 contribute to the (6S)-5,6,7,8-tetrahydrofolate site; that span reads GHL. N6-(pyridoxal phosphate)lysine is present on K242.

The protein belongs to the SHMT family. Homodimer. Pyridoxal 5'-phosphate is required as a cofactor.

The protein resides in the cytoplasm. It catalyses the reaction (6R)-5,10-methylene-5,6,7,8-tetrahydrofolate + glycine + H2O = (6S)-5,6,7,8-tetrahydrofolate + L-serine. Its pathway is one-carbon metabolism; tetrahydrofolate interconversion. It functions in the pathway amino-acid biosynthesis; glycine biosynthesis; glycine from L-serine: step 1/1. Its function is as follows. Catalyzes the reversible interconversion of serine and glycine with tetrahydrofolate (THF) serving as the one-carbon carrier. This reaction serves as the major source of one-carbon groups required for the biosynthesis of purines, thymidylate, methionine, and other important biomolecules. Also exhibits THF-independent aldolase activity toward beta-hydroxyamino acids, producing glycine and aldehydes, via a retro-aldol mechanism. This Brucella abortus (strain S19) protein is Serine hydroxymethyltransferase.